The sequence spans 194 residues: Peptidyl-tRNA hydrolase (194 aa).

Residue His-17 coordinates tRNA. His-22 functions as the Proton acceptor in the catalytic mechanism. 3 residues coordinate tRNA: Phe-68, Asn-70, and Asn-116.

Belongs to the PTH family. As to quaternary structure, monomer.

The protein localises to the cytoplasm. It catalyses the reaction an N-acyl-L-alpha-aminoacyl-tRNA + H2O = an N-acyl-L-amino acid + a tRNA + H(+). Hydrolyzes ribosome-free peptidyl-tRNAs (with 1 or more amino acids incorporated), which drop off the ribosome during protein synthesis, or as a result of ribosome stalling. In terms of biological role, catalyzes the release of premature peptidyl moieties from peptidyl-tRNA molecules trapped in stalled 50S ribosomal subunits, and thus maintains levels of free tRNAs and 50S ribosomes. This chain is Peptidyl-tRNA hydrolase, found in Xanthomonas oryzae pv. oryzae (strain MAFF 311018).